The sequence spans 224 residues: Urease accessory protein UreG (224 aa).

A compositionally biased stretch (basic residues) spans 1–20 (MATHSHPHSHTVPARPRRVR). Positions 1–25 (MATHSHPHSHTVPARPRRVRKPGEP) are disordered. Position 32–39 (32–39 (GPVGSGKT)) interacts with GTP.

This sequence belongs to the SIMIBI class G3E GTPase family. UreG subfamily. In terms of assembly, homodimer. UreD, UreF and UreG form a complex that acts as a GTP-hydrolysis-dependent molecular chaperone, activating the urease apoprotein by helping to assemble the nickel containing metallocenter of UreC. The UreE protein probably delivers the nickel.

It localises to the cytoplasm. Its function is as follows. Facilitates the functional incorporation of the urease nickel metallocenter. This process requires GTP hydrolysis, probably effectuated by UreG. In Mycobacterium bovis (strain ATCC BAA-935 / AF2122/97), this protein is Urease accessory protein UreG.